The following is a 193-amino-acid chain: uncharacterized protein (193 aa).

The region spanning 1-189 (MDKKEYCYYC…CTYEEYLHNL (189 aa)) is the AMMECR1 domain.

This is an uncharacterized protein from Schizosaccharomyces pombe (strain 972 / ATCC 24843) (Fission yeast).